The sequence spans 172 residues: 2S seed storage-like protein (172 aa).

An N-terminal signal peptide occupies residues 1 to 35; sequence MGVFSPSTTRLTLKWFSLSVALFLLFHWGIPSVDG. The interval 108 to 172 is disordered; it reads FMDSDSQEDA…RYSMTGSSFK (65 aa). The span at 151 to 160 shows a compositional bias: basic and acidic residues; it reads EPPRRCDIQR.

It belongs to the 2S seed storage albumins family.

This is 2S seed storage-like protein from Picea glauca (White spruce).